A 549-amino-acid chain; its full sequence is Probable protein kinase UbiB (549 aa).

The region spanning 123 to 501 (DFNDTPLASA…QQKSHKSNYL (379 aa)) is the Protein kinase domain. Residues 129–137 (LASASISQV) and lysine 152 each bind ATP. Aspartate 287 serves as the catalytic Proton acceptor. 2 helical membrane-spanning segments follow: residues 498–518 (SNYLLITSAVLLICGTILFTQ) and 519–539 (IVTLWPAYTCIGAGILIWAIG).

This sequence belongs to the ABC1 family. UbiB subfamily.

The protein localises to the cell inner membrane. It participates in cofactor biosynthesis; ubiquinone biosynthesis [regulation]. Functionally, is probably a protein kinase regulator of UbiI activity which is involved in aerobic coenzyme Q (ubiquinone) biosynthesis. This Shewanella frigidimarina (strain NCIMB 400) protein is Probable protein kinase UbiB.